The sequence spans 376 residues: Transmembrane protein 43 homolog (376 aa).

The Cytoplasmic segment spans residues Met-1 to Ser-10. Residues His-11–Trp-31 traverse the membrane as a helical segment. At Asn-32–Gln-277 the chain is on the lumenal side. Residues Val-278 to Cys-298 form a helical membrane-spanning segment. The Cytoplasmic portion of the chain corresponds to Asn-299 to Pro-323. The next 2 membrane-spanning stretches (helical) occupy residues Val-324 to Ile-344 and Leu-345 to Phe-365. Residues Thr-366–Asp-376 lie on the Cytoplasmic side of the membrane.

The protein belongs to the TMEM43 family.

The protein resides in the endoplasmic reticulum membrane. The protein localises to the nucleus envelope. Functionally, involved in lipid metabolism and utilization. This Drosophila melanogaster (Fruit fly) protein is Transmembrane protein 43 homolog.